The chain runs to 562 residues: SLAIN motif-containing protein-like (562 aa).

Disordered regions lie at residues 292–313, 344–381, and 409–562; these read QDYA…LHSL, HRYS…IQNH, and SLEA…DGCY. Composition is skewed to low complexity over residues 295–311 and 345–355; these read ASSS…ASLH and RYSPSPLSSPR. Polar residues-rich tracts occupy residues 356 to 370, 424 to 442, 465 to 531, and 539 to 553; these read CQSP…TTSR, QGPS…STPP, VSTS…STVP, and SRRS…STLG.

This sequence belongs to the SLAIN motif-containing family.

The protein is SLAIN motif-containing protein-like of Xenopus laevis (African clawed frog).